Consider the following 453-residue polypeptide: Ribulose bisphosphate carboxylase large chain (453 aa).

Residues 1–2 (MS) constitute a propeptide that is removed on maturation. Pro-3 carries the post-translational modification N-acetylproline. At Lys-14 the chain carries N6,N6,N6-trimethyllysine. The substrate site is built by Asn-123 and Thr-173. Residue Lys-175 is the Proton acceptor of the active site. Lys-177 contacts substrate. Mg(2+) contacts are provided by Lys-201, Asp-203, and Glu-204. At Lys-201 the chain carries N6-carboxylysine. His-294 serves as the catalytic Proton acceptor. Arg-295, His-327, and Ser-379 together coordinate substrate.

The protein belongs to the RuBisCO large chain family. Type I subfamily. In terms of assembly, heterohexadecamer of 8 large chains and 8 small chains; disulfide-linked. The disulfide link is formed within the large subunit homodimers. It depends on Mg(2+) as a cofactor. The disulfide bond which can form in the large chain dimeric partners within the hexadecamer appears to be associated with oxidative stress and protein turnover.

It localises to the plastid. Its subcellular location is the chloroplast. The catalysed reaction is 2 (2R)-3-phosphoglycerate + 2 H(+) = D-ribulose 1,5-bisphosphate + CO2 + H2O. It carries out the reaction D-ribulose 1,5-bisphosphate + O2 = 2-phosphoglycolate + (2R)-3-phosphoglycerate + 2 H(+). Its function is as follows. RuBisCO catalyzes two reactions: the carboxylation of D-ribulose 1,5-bisphosphate, the primary event in carbon dioxide fixation, as well as the oxidative fragmentation of the pentose substrate in the photorespiration process. Both reactions occur simultaneously and in competition at the same active site. The sequence is that of Ribulose bisphosphate carboxylase large chain from Cruciata glabra (Slender crosswort).